A 369-amino-acid chain; its full sequence is MTQKTILNDTHRALGAKMVDFGGWDMPIHYGSQLDEHHQVRRDAGMFDVSHMTVVDLHGARVRAFLRDLLANSVDKLKVCGKALYTCMLNPQGGVIDDLIVYYMSEDFFRLVVNAATREKDLQWIGEQAVRFDVRVEERSDFAMIAVQGPNARANVIDLLDPADTAAASKLGRFAALQTRSRDGIELFLARTGYTGEDGFEIVLPQEAAVAFWNALLAQGVKPAGLGARDTLRLEAGMHLYGQDMDDAVTPYEAALAWTIALDEGRDFIGRRVLESQKAQGAPRQLIGVVMDDKGVLRHGQAVFTASGEGEILSGTFSPTLGKAIAFARVPAGSIDQLRVDIRGKQVPLRAVKFPFVRDGQAQPGVLGD.

The protein belongs to the GcvT family. In terms of assembly, the glycine cleavage system is composed of four proteins: P, T, L and H.

The enzyme catalyses N(6)-[(R)-S(8)-aminomethyldihydrolipoyl]-L-lysyl-[protein] + (6S)-5,6,7,8-tetrahydrofolate = N(6)-[(R)-dihydrolipoyl]-L-lysyl-[protein] + (6R)-5,10-methylene-5,6,7,8-tetrahydrofolate + NH4(+). The glycine cleavage system catalyzes the degradation of glycine. The sequence is that of Aminomethyltransferase from Xanthomonas oryzae pv. oryzae (strain MAFF 311018).